The chain runs to 392 residues: Anhydro-N-acetylmuramic acid kinase (392 aa).

Position 22–29 (22–29 (GTSMDGVD)) interacts with ATP.

The protein belongs to the anhydro-N-acetylmuramic acid kinase family.

It catalyses the reaction 1,6-anhydro-N-acetyl-beta-muramate + ATP + H2O = N-acetyl-D-muramate 6-phosphate + ADP + H(+). Its pathway is amino-sugar metabolism; 1,6-anhydro-N-acetylmuramate degradation. The protein operates within cell wall biogenesis; peptidoglycan recycling. Catalyzes the specific phosphorylation of 1,6-anhydro-N-acetylmuramic acid (anhMurNAc) with the simultaneous cleavage of the 1,6-anhydro ring, generating MurNAc-6-P. Is required for the utilization of anhMurNAc either imported from the medium or derived from its own cell wall murein, and thus plays a role in cell wall recycling. This Burkholderia pseudomallei (strain 1106a) protein is Anhydro-N-acetylmuramic acid kinase.